Reading from the N-terminus, the 432-residue chain is Adenylosuccinate synthetase (432 aa).

GTP contacts are provided by residues 12–18 and 40–42; these read GDEGKGK and GHT. Catalysis depends on aspartate 13, which acts as the Proton acceptor. Mg(2+) contacts are provided by aspartate 13 and glycine 40. Residues 13–16, 38–41, threonine 132, arginine 146, glutamine 226, threonine 241, and arginine 305 each bind IMP; these read DEGK and NAGH. The active-site Proton donor is histidine 41. 301–307 is a substrate binding site; the sequence is VVTGRKR. Residues arginine 307, 333–335, and 415–417 contribute to the GTP site; these read KLD and STS.

This sequence belongs to the adenylosuccinate synthetase family. In terms of assembly, homodimer. The cofactor is Mg(2+).

Its subcellular location is the cytoplasm. It catalyses the reaction IMP + L-aspartate + GTP = N(6)-(1,2-dicarboxyethyl)-AMP + GDP + phosphate + 2 H(+). The protein operates within purine metabolism; AMP biosynthesis via de novo pathway; AMP from IMP: step 1/2. Functionally, plays an important role in the de novo pathway of purine nucleotide biosynthesis. Catalyzes the first committed step in the biosynthesis of AMP from IMP. This Rhizobium johnstonii (strain DSM 114642 / LMG 32736 / 3841) (Rhizobium leguminosarum bv. viciae) protein is Adenylosuccinate synthetase.